The chain runs to 210 residues: Orotate phosphoribosyltransferase (210 aa).

5-phospho-alpha-D-ribose 1-diphosphate contacts are provided by residues Arg-96, Lys-100, His-102, and 122 to 130 (EDLISTGGS). Ser-126 contacts orotate.

It belongs to the purine/pyrimidine phosphoribosyltransferase family. PyrE subfamily. In terms of assembly, homodimer. The cofactor is Mg(2+).

The catalysed reaction is orotidine 5'-phosphate + diphosphate = orotate + 5-phospho-alpha-D-ribose 1-diphosphate. It functions in the pathway pyrimidine metabolism; UMP biosynthesis via de novo pathway; UMP from orotate: step 1/2. In terms of biological role, catalyzes the transfer of a ribosyl phosphate group from 5-phosphoribose 1-diphosphate to orotate, leading to the formation of orotidine monophosphate (OMP). The polypeptide is Orotate phosphoribosyltransferase (Streptococcus pneumoniae (strain ATCC BAA-255 / R6)).